The following is a 423-amino-acid chain: Serine--tRNA ligase (423 aa).

Residue 231 to 233 coordinates L-serine; sequence TGE. 262 to 264 contacts ATP; it reads RSE. Glutamate 285 serves as a coordination point for L-serine. 349–352 is an ATP binding site; it reads EISS. An L-serine-binding site is contributed by serine 385.

The protein belongs to the class-II aminoacyl-tRNA synthetase family. Type-1 seryl-tRNA synthetase subfamily. In terms of assembly, homodimer. The tRNA molecule binds across the dimer.

It localises to the cytoplasm. The catalysed reaction is tRNA(Ser) + L-serine + ATP = L-seryl-tRNA(Ser) + AMP + diphosphate + H(+). The enzyme catalyses tRNA(Sec) + L-serine + ATP = L-seryl-tRNA(Sec) + AMP + diphosphate + H(+). The protein operates within aminoacyl-tRNA biosynthesis; selenocysteinyl-tRNA(Sec) biosynthesis; L-seryl-tRNA(Sec) from L-serine and tRNA(Sec): step 1/1. Catalyzes the attachment of serine to tRNA(Ser). Is also able to aminoacylate tRNA(Sec) with serine, to form the misacylated tRNA L-seryl-tRNA(Sec), which will be further converted into selenocysteinyl-tRNA(Sec). The polypeptide is Serine--tRNA ligase (Coxiella burnetii (strain CbuG_Q212) (Coxiella burnetii (strain Q212))).